We begin with the raw amino-acid sequence, 1405 residues long: DNA-directed RNA polymerase subunit beta' (1405 aa).

The Zn(2+) site is built by Cys-70, Cys-72, Cys-85, and Cys-88. The Mg(2+) site is built by Asp-460, Asp-462, and Asp-464. Cys-815, Cys-890, Cys-897, and Cys-900 together coordinate Zn(2+). The tract at residues 1375–1405 (GLTDSEMETLSGKPAGAEPVAALADAGADEE) is disordered.

This sequence belongs to the RNA polymerase beta' chain family. The RNAP catalytic core consists of 2 alpha, 1 beta, 1 beta' and 1 omega subunit. When a sigma factor is associated with the core the holoenzyme is formed, which can initiate transcription. Mg(2+) is required as a cofactor. Requires Zn(2+) as cofactor.

The enzyme catalyses RNA(n) + a ribonucleoside 5'-triphosphate = RNA(n+1) + diphosphate. Its function is as follows. DNA-dependent RNA polymerase catalyzes the transcription of DNA into RNA using the four ribonucleoside triphosphates as substrates. In Xanthomonas oryzae pv. oryzae (strain MAFF 311018), this protein is DNA-directed RNA polymerase subunit beta'.